Consider the following 935-residue polypeptide: C-1-tetrahydrofolate synthase, cytoplasmic (935 aa).

An N-acetylmethionine modification is found at M1. The tract at residues 2 to 291 (APAEILNGKE…MLMQSTVESA (290 aa)) is methylenetetrahydrofolate dehydrogenase and methenyltetrahydrofolate cyclohydrolase (D/C) domain. Substrate contacts are provided by residues 52-56 (YINVK) and 99-101 (VQL). K56 is a catalytic residue. Residues 172-174 (GRS) and S197 each bind NADP(+). 272–276 (PGGVG) is a substrate binding site. The tract at residues 310 to 935 (LNLKTPVPSD…PETEQVNGLF (626 aa)) is formyltetrahydrofolate synthetase domain. Residue S318 is modified to Phosphoserine. Position 380–387 (380–387 (TPLGEGKS)) interacts with ATP. Phosphoserine is present on residues S413 and S490.

In the N-terminal section; belongs to the tetrahydrofolate dehydrogenase/cyclohydrolase family. It in the C-terminal section; belongs to the formate--tetrahydrofolate ligase family. As to quaternary structure, homodimer. In terms of tissue distribution, ubiquitous.

It is found in the cytoplasm. It carries out the reaction (6R)-5,10-methylene-5,6,7,8-tetrahydrofolate + NADP(+) = (6R)-5,10-methenyltetrahydrofolate + NADPH. It catalyses the reaction (6R)-5,10-methenyltetrahydrofolate + H2O = (6R)-10-formyltetrahydrofolate + H(+). The enzyme catalyses (6S)-5,6,7,8-tetrahydrofolate + formate + ATP = (6R)-10-formyltetrahydrofolate + ADP + phosphate. It functions in the pathway one-carbon metabolism; tetrahydrofolate interconversion. Trifunctional enzyme that catalyzes the interconversion of three forms of one-carbon-substituted tetrahydrofolate: (6R)-5,10-methylene-5,6,7,8-tetrahydrofolate, 5,10-methenyltetrahydrofolate and (6S)-10-formyltetrahydrofolate. These derivatives of tetrahydrofolate are differentially required in nucleotide and amino acid biosynthesis, (6S)-10-formyltetrahydrofolate being required for purine biosynthesis while (6R)-5,10-methylene-5,6,7,8-tetrahydrofolate is used for serine and methionine biosynthesis for instance. This is C-1-tetrahydrofolate synthase, cytoplasmic (MTHFD1) from Homo sapiens (Human).